Consider the following 617-residue polypeptide: mRNA export factor MEX67 (617 aa).

The span at 1 to 10 shows a compositional bias: gly residues; it reads MSYRGRGGGY. Residues 1 to 24 are disordered; that stretch reads MSYRGRGGGYNNNRGQFSSGPHQH. 3 LRR repeats span residues 185-206, 211-232, and 237-258; these read DVDS…TSMA, KLQN…ETWR, and FLRE…AEIQ. One can recognise an NTF2 domain in the interval 309-499; that stretch reads LATNFIANYL…MIVASDTLLI (191 aa). 2 disordered regions span residues 442–469 and 513–554; these read EVDG…HKRI and LPSN…TTAD. Composition is skewed to low complexity over residues 445-459 and 526-542; these read GSAS…GGSR and ATST…TTPQ. The TAP-C domain occupies 565-617; the sequence is QIQQELLVKILLETKLNINYGIMLCEQSNWDYQQASVNFKNSAASLPSDAFVQ.

The protein belongs to the NXF family. In terms of assembly, interacts with nucleoporin complex protein MTR2.

The protein localises to the nucleus. It is found in the cytoplasm. Its function is as follows. Involved in the export of mRNA from the nucleus to the cytoplasm. This Candida albicans (strain SC5314 / ATCC MYA-2876) (Yeast) protein is mRNA export factor MEX67.